The sequence spans 137 residues: Nucleoside diphosphate kinase (137 aa).

ATP contacts are provided by Lys-9, Phe-57, Arg-85, Thr-91, Arg-102, and Asn-112. The active-site Pros-phosphohistidine intermediate is the His-115.

It belongs to the NDK family. Homotetramer. It depends on Mg(2+) as a cofactor.

The protein localises to the cytoplasm. The enzyme catalyses a 2'-deoxyribonucleoside 5'-diphosphate + ATP = a 2'-deoxyribonucleoside 5'-triphosphate + ADP. It carries out the reaction a ribonucleoside 5'-diphosphate + ATP = a ribonucleoside 5'-triphosphate + ADP. Functionally, major role in the synthesis of nucleoside triphosphates other than ATP. The ATP gamma phosphate is transferred to the NDP beta phosphate via a ping-pong mechanism, using a phosphorylated active-site intermediate. The protein is Nucleoside diphosphate kinase of Syntrophotalea carbinolica (strain DSM 2380 / NBRC 103641 / GraBd1) (Pelobacter carbinolicus).